A 122-amino-acid chain; its full sequence is UPF0382 membrane protein SH2409 (122 aa).

The next 4 membrane-spanning stretches (helical) occupy residues 3–23 (LFII…AFGA), 46–66 (MYHG…SINV), 69–89 (AGWL…ILAL), and 98–118 (ITPI…ISTF).

This sequence belongs to the UPF0382 family.

The protein resides in the cell membrane. The chain is UPF0382 membrane protein SH2409 from Staphylococcus haemolyticus (strain JCSC1435).